Here is a 63-residue protein sequence, read N- to C-terminus: Beta-defensin 3 (63 aa).

The first 20 residues, 1-20, serve as a signal peptide directing secretion; that stretch reads MRIHYLLFSFLLVLLSPLSA. A propeptide spanning residues 21 to 22 is cleaved from the precursor; sequence FS. 3 disulfides stabilise this stretch: C31/C59, C38/C52, and C42/C60.

This sequence belongs to the beta-defensin family.

The protein resides in the secreted. Its function is as follows. Has bactericidal activity. In Rattus norvegicus (Rat), this protein is Beta-defensin 3 (Defb3).